Reading from the N-terminus, the 312-residue chain is Isethionate sulfite-lyase activating enzyme (312 aa).

In terms of domain architecture, Radical SAM core spans 22–309; that stretch reads HDGPGIRTIV…VDETRGAVTE (288 aa). [4Fe-4S] cluster contacts are provided by Cys36, Cys40, Cys43, Cys62, Cys65, Cys68, Cys72, Cys92, Cys95, Cys100, and Cys104. 42–44 is a binding site for S-adenosyl-L-methionine; the sequence is WCS. 4Fe-4S ferredoxin-type domains follow at residues 53-82 and 83-115; these read PQVA…VNED and GTLS…YGEN. S-adenosyl-L-methionine-binding positions include Gly144, 193-195, and His267; that span reads DVK.

The protein belongs to the organic radical-activating enzymes family. Monomer. [4Fe-4S] cluster serves as cofactor.

It catalyses the reaction glycyl-[protein] + reduced [flavodoxin] + S-adenosyl-L-methionine = glycin-2-yl radical-[protein] + semiquinone [flavodoxin] + 5'-deoxyadenosine + L-methionine + H(+). It participates in organosulfur degradation; alkanesulfonate degradation. In terms of biological role, involved in an anaerobic respiration pathway that converts the sulfonate taurine (2-aminoethanesulfonate) to ammonia, acetate and sulfide. Catalyzes activation of the isethionate sulfite-lyase IslA under anaerobic conditions by generation of an organic free radical on a glycine residue, via a homolytic cleavage of S-adenosyl-L-methionine (SAM). This Bilophila wadsworthia (strain 3_1_6) protein is Isethionate sulfite-lyase activating enzyme.